The primary structure comprises 257 residues: Pimeloyl-[acyl-carrier protein] methyl ester esterase (257 aa).

The AB hydrolase-1 domain maps to 16–240; the sequence is LVLIHGWGMN…EQASHAPFIS (225 aa). Substrate-binding positions include Trp-22, 82-83, and 143-147; these read SL and FMALQ. Ser-82 acts as the Nucleophile in catalysis. Active-site residues include Asp-207 and His-235. A substrate-binding site is contributed by His-235.

Belongs to the AB hydrolase superfamily. Carboxylesterase BioH family. As to quaternary structure, monomer.

It is found in the cytoplasm. The catalysed reaction is 6-carboxyhexanoyl-[ACP] methyl ester + H2O = 6-carboxyhexanoyl-[ACP] + methanol + H(+). It participates in cofactor biosynthesis; biotin biosynthesis. Functionally, the physiological role of BioH is to remove the methyl group introduced by BioC when the pimeloyl moiety is complete. It allows to synthesize pimeloyl-ACP via the fatty acid synthetic pathway through the hydrolysis of the ester bonds of pimeloyl-ACP esters. In Aliivibrio fischeri (strain ATCC 700601 / ES114) (Vibrio fischeri), this protein is Pimeloyl-[acyl-carrier protein] methyl ester esterase.